Consider the following 455-residue polypeptide: Angiopoietin-related protein 3 (455 aa).

The first 16 residues, 1 to 16, serve as a signal peptide directing secretion; it reads MHTIKLFLFVVPLVIA. Residues 17 to 165 form a sufficient to inhibit LPL lipase activity region; the sequence is SRVDPDLSSF…QEHPEVTSLK (149 aa). Residues 17 to 207 are sufficient to inhibit LIPG/EL phospholipase activity; it reads SRVDPDLSSF…EIEKQLRKTG (191 aa). Positions 32–56 are required for inhibition of LPL lipase activity; sequence EPKSRFAMLDDVKILANGLLQLGHG. Residues 85–206 are a coiled coil; sequence LSLRTNEIKE…KEIEKQLRKT (122 aa). N-linked (GlcNAc...) asparagine glycosylation occurs at asparagine 115. The tract at residues 202 to 242 is disordered; it reads QLRKTGIQEPSENSLSSKSRAPRTTPPLQLNETENTEQDDL. A compositionally biased stretch (polar residues) spans 209–220; that stretch reads QEPSENSLSSKS. O-linked (GlcNAc) threonine glycosylation occurs at threonine 226. N-linked (GlcNAc...) asparagine glycosylation occurs at asparagine 232. A Fibrinogen C-terminal domain is found at 237-455; that stretch reads TEQDDLPADC…SSKMMLQPTT (219 aa). A disulfide bond links cysteine 246 and cysteine 274. Residues asparagine 296 and asparagine 357 are each glycosylated (N-linked (GlcNAc...) asparagine). A disulfide bond links cysteine 394 and cysteine 408.

In terms of assembly, interacts with ANGPTL8. Interacts with ITGB3. Post-translationally, in part proteolytically cleaved by proprotein convertases; proposed to be involved in activation. In primary hepatocytes is intracellularily predominantly processed by FURIN and extracellularily by FURIN and PCSK6/PACE4. In 18.5 dpc embryos 75% of protein is found to be processed compared to 25 % in adults. Predominantly expressed in liver, weakly expressed in kidney and lung. Expressed in podocytes (at protein level). Expressed in hypothalamic neurons (at protein level). Expressed in bone marrow sinusoidal endothelial cells (at protein level).

Its subcellular location is the secreted. It is found in the cell projection. The protein resides in the lamellipodium. Its function is as follows. Acts in part as a hepatokine that is involved in regulation of lipid and glucose metabolism. Proposed to play a role in the trafficking of energy substrates to either storage or oxidative tissues in response to food intake. Has a stimulatory effect on plasma triglycerides (TG), which is achieved by suppressing plasma TG clearance via inhibition of LPL activity; the function seems to be specific for the feeding conditions. The inhibition of LPL activity appears to be an indirect mechanism involving recruitment of proprotein convertases PCSK6 and FURIN to LPL leading to cleavage and dissociation of LPL from the cell surface; the function does not require ANGPTL3 proteolytic cleavage but seems to be mediated by the N-terminal domain, and is not inhibited by GPIHBP1. Can inhibit endothelial lipase, causing increased plasma levels of high density lipoprotein (HDL) cholesterol and phospholipids; the cleaved N-terminal domain is more efficient than the uncleaved proprotein. Can bind to adipocytes to activate lipolysis, releasing free fatty acids and glycerol. Suppresses LPL specifically in oxidative tissues which is required to route very low density lipoprotein (VLDL)-TG to white adipose tissue (WAT) for storage in response to food; the function may involve cooperation with circulating, liver-derived ANGPTL8 and ANGPTL4 expression in WAT. Contributes to lower plasma levels of low density lipoprotein (LDL)-cholesterol by a mechanism that is independent of the canonical pathway implicating APOE and LDLR. May stimulate hypothalamic LPL activity. Functionally, involved in angiogenesis. Binds to endothelial cells via integrin alpha-V/beta-3 (ITGAV:ITGB3), activates FAK, MAPK and Akt signaling pathways and induces cell adhesion and cell migration. May increase the motility of podocytes. Secreted from podocytes, may modulate properties of glomerular endothelial cells involving integrin alpha-V/beta-3 and Akt signaling. May induce actin filament rearrangements in podocytes implicating integrin alpha-V/beta-3 and Rac1 activation. Binds to hematopoietic stem cells (HSC) and is involved in the regulation of HSC activity probably implicating down-regulation of IKZF1/IKAROS. This Mus musculus (Mouse) protein is Angiopoietin-related protein 3 (Angptl3).